A 234-amino-acid polypeptide reads, in one-letter code: Leucyl/phenylalanyl-tRNA--protein transferase (234 aa).

It belongs to the L/F-transferase family.

The protein resides in the cytoplasm. The catalysed reaction is N-terminal L-lysyl-[protein] + L-leucyl-tRNA(Leu) = N-terminal L-leucyl-L-lysyl-[protein] + tRNA(Leu) + H(+). It catalyses the reaction N-terminal L-arginyl-[protein] + L-leucyl-tRNA(Leu) = N-terminal L-leucyl-L-arginyl-[protein] + tRNA(Leu) + H(+). The enzyme catalyses L-phenylalanyl-tRNA(Phe) + an N-terminal L-alpha-aminoacyl-[protein] = an N-terminal L-phenylalanyl-L-alpha-aminoacyl-[protein] + tRNA(Phe). Functionally, functions in the N-end rule pathway of protein degradation where it conjugates Leu, Phe and, less efficiently, Met from aminoacyl-tRNAs to the N-termini of proteins containing an N-terminal arginine or lysine. The chain is Leucyl/phenylalanyl-tRNA--protein transferase from Salmonella gallinarum (strain 287/91 / NCTC 13346).